We begin with the raw amino-acid sequence, 392 residues long: Iron-sulfur cluster assembly SufBD family protein ML0594 (392 aa).

Belongs to the iron-sulfur cluster assembly SufBD family.

In Mycobacterium leprae (strain TN), this protein is Iron-sulfur cluster assembly SufBD family protein ML0594.